A 204-amino-acid polypeptide reads, in one-letter code: Ribosomal RNA small subunit methyltransferase G (204 aa).

The S-adenosyl-L-methionine site is built by Gly73, Phe78, and Arg139.

The protein belongs to the methyltransferase superfamily. RNA methyltransferase RsmG family.

The protein localises to the cytoplasm. The enzyme catalyses guanosine(527) in 16S rRNA + S-adenosyl-L-methionine = N(7)-methylguanosine(527) in 16S rRNA + S-adenosyl-L-homocysteine. In terms of biological role, specifically methylates the N7 position of guanine in position 527 of 16S rRNA. This chain is Ribosomal RNA small subunit methyltransferase G, found in Coxiella burnetii (strain CbuG_Q212) (Coxiella burnetii (strain Q212)).